Reading from the N-terminus, the 318-residue chain is Ankyrin repeat domain-containing protein 1 (318 aa).

Residues 37-77 (ALEKQEDLKTTSKSLIELEEEKQSKEKQLKSELLKKKLEER) adopt a coiled-coil conformation. 5 ANK repeats span residues 151 to 180 (YKRT…NIEF), 184 to 213 (LEST…AINA), 217 to 246 (LLST…DLNA), 250 to 279 (EGDT…NLNI), and 283 to 314 (AGKT…KNSH).

It is found in the nucleus. Its function is as follows. May act as a nuclear transcription factor that negatively regulates the expression of cardiac genes. In Xenopus laevis (African clawed frog), this protein is Ankyrin repeat domain-containing protein 1 (ankrd1).